We begin with the raw amino-acid sequence, 394 residues long: MNSIIELTDYYSSNNYAPLKLVISKGKGVKVWDTDGKQYIDCISGFSVANQGHCHPTIVKAMTEQASKLSIISRVLYSDNLGKWEEKICHLAKKDKVLPLNSGTEAVEAAIKIARKWGSEVKGITDGQVEIIAMNNNFHGRTLGSLSLSNHDAYKAGFHPLLQGTTTVDFGDIEQLTQAISPNTAAIILEPIQGEGGVNIPPKGYIQAVRQLCDKHQILLIADEIQVGLGRTGKWFAMEWEQVVPDIYILGKALGGGLYPVSAVLANNDVMRVLTPGTHGSTFGGNPLAIAISTAALDVLKDEQLVERSERLGSFLLKALLQLKHPSIKEIRGRGLFIGIELNTDAAPFVDQLIQRGILCKDTHRTIIRLSPPLVIDKEEIHQIVAAFQDVFKN.

At Lys-252 the chain carries N6-(pyridoxal phosphate)lysine.

It belongs to the class-III pyridoxal-phosphate-dependent aminotransferase family. OAT subfamily. Pyridoxal 5'-phosphate serves as cofactor.

It localises to the cytoplasm. It carries out the reaction a 2-oxocarboxylate + L-ornithine = L-glutamate 5-semialdehyde + an L-alpha-amino acid. It functions in the pathway amino-acid biosynthesis; L-proline biosynthesis; L-glutamate 5-semialdehyde from L-ornithine: step 1/1. In terms of biological role, catalyzes the interconversion of ornithine to glutamate semialdehyde. The chain is Ornithine aminotransferase 1 from Staphylococcus aureus (strain COL).